The chain runs to 202 residues: NADH-quinone oxidoreductase subunit B (202 aa).

Polar residues predominate over residues 1–13 (MSSPTTKFSNAAS). Residues 1-32 (MSSPTTKFSNAASSAGGPRVTPAAASILDPRT) form a disordered region. The [4Fe-4S] cluster site is built by C81, C82, C146, and C176.

This sequence belongs to the complex I 20 kDa subunit family. As to quaternary structure, NDH-1 is composed of 14 different subunits. Subunits NuoB, C, D, E, F, and G constitute the peripheral sector of the complex. [4Fe-4S] cluster is required as a cofactor.

The protein localises to the cell inner membrane. It carries out the reaction a quinone + NADH + 5 H(+)(in) = a quinol + NAD(+) + 4 H(+)(out). NDH-1 shuttles electrons from NADH, via FMN and iron-sulfur (Fe-S) centers, to quinones in the respiratory chain. The immediate electron acceptor for the enzyme in this species is believed to be ubiquinone. Couples the redox reaction to proton translocation (for every two electrons transferred, four hydrogen ions are translocated across the cytoplasmic membrane), and thus conserves the redox energy in a proton gradient. This Nitrobacter hamburgensis (strain DSM 10229 / NCIMB 13809 / X14) protein is NADH-quinone oxidoreductase subunit B.